The sequence spans 319 residues: 1-aminocyclopropane-1-carboxylate oxidase 4 (319 aa).

The 101-residue stretch at Pro-153–Pro-253 folds into the Fe2OG dioxygenase domain. Fe cation contacts are provided by His-177, Asp-179, and His-234.

It belongs to the iron/ascorbate-dependent oxidoreductase family. The cofactor is Fe cation.

The catalysed reaction is 1-aminocyclopropane-1-carboxylate + L-ascorbate + O2 = ethene + L-dehydroascorbate + hydrogen cyanide + CO2 + 2 H2O. It participates in alkene biosynthesis; ethylene biosynthesis via S-adenosyl-L-methionine; ethylene from S-adenosyl-L-methionine: step 2/2. This Petunia hybrida (Petunia) protein is 1-aminocyclopropane-1-carboxylate oxidase 4 (ACO4).